Here is a 118-residue protein sequence, read N- to C-terminus: UPF0102 protein Swit_0572 (118 aa).

It belongs to the UPF0102 family.

The protein is UPF0102 protein Swit_0572 of Rhizorhabdus wittichii (strain DSM 6014 / CCUG 31198 / JCM 15750 / NBRC 105917 / EY 4224 / RW1) (Sphingomonas wittichii).